Consider the following 28-residue polypeptide: Phospholipase A2 pseudexin C chain (28 aa).

Residue Y28 coordinates Ca(2+).

The protein belongs to the phospholipase A2 family. Group I subfamily. Ca(2+) serves as cofactor. In terms of tissue distribution, expressed by the venom gland.

Its subcellular location is the secreted. It carries out the reaction a 1,2-diacyl-sn-glycero-3-phosphocholine + H2O = a 1-acyl-sn-glycero-3-phosphocholine + a fatty acid + H(+). Its function is as follows. PLA2 catalyzes the calcium-dependent hydrolysis of the 2-acyl groups in 3-sn-phosphoglycerides. The protein is Phospholipase A2 pseudexin C chain of Pseudechis porphyriacus (Red-bellied black snake).